We begin with the raw amino-acid sequence, 501 residues long: Inactive cytidine monophosphate-N-acetylneuraminic acid hydroxylase (501 aa).

This sequence belongs to the CMP-Neu5Ac hydroxylase family. In terms of tissue distribution, widely expressed. Highly expressed in thymus. Not expressed in brain. May be expressed in adult stem cells (at protein level).

It is found in the cytoplasm. In terms of biological role, sialic acids are components of carbohydrate chains of glycoconjugates and are involved in cell-cell recognition and cell-pathogen interactions. That protein has no CMP-N-acetylneuraminate monooxygenase activity and is not able to convert CMP-N-acetylneuraminic acid (CMP-Neu5Ac) into its hydroxylated derivative CMP-N-glycolylneuraminic acid (CMP-Neu5Gc), a sialic acid abundantly expressed at the surface of many cells in vertebrates. However, it may play a role in Wnt signaling. This chain is Inactive cytidine monophosphate-N-acetylneuraminic acid hydroxylase (CMAHP), found in Homo sapiens (Human).